A 119-amino-acid chain; its full sequence is NADH-quinone oxidoreductase subunit A (119 aa).

Transmembrane regions (helical) follow at residues Ile-9–Ile-29, Leu-63–Val-83, and Ile-88–Ile-108.

It belongs to the complex I subunit 3 family. In terms of assembly, NDH-1 is composed of 14 different subunits. Subunits NuoA, H, J, K, L, M, N constitute the membrane sector of the complex.

It is found in the cell inner membrane. The enzyme catalyses a quinone + NADH + 5 H(+)(in) = a quinol + NAD(+) + 4 H(+)(out). In terms of biological role, NDH-1 shuttles electrons from NADH, via FMN and iron-sulfur (Fe-S) centers, to quinones in the respiratory chain. The immediate electron acceptor for the enzyme in this species is believed to be ubiquinone. Couples the redox reaction to proton translocation (for every two electrons transferred, four hydrogen ions are translocated across the cytoplasmic membrane), and thus conserves the redox energy in a proton gradient. This chain is NADH-quinone oxidoreductase subunit A, found in Albidiferax ferrireducens (strain ATCC BAA-621 / DSM 15236 / T118) (Rhodoferax ferrireducens).